The sequence spans 101 residues: NADH-quinone oxidoreductase subunit K (101 aa).

3 helical membrane-spanning segments follow: residues 4 to 24 (LSHFLVLGGVLFAIAVLGIFL), 30 to 50 (IVLLMAIELMLLAVNMNFIAF), and 61 to 81 (VFVFFILTVAAAESAIGLAIL).

Belongs to the complex I subunit 4L family. NDH-1 is composed of 14 different subunits. Subunits NuoA, H, J, K, L, M, N constitute the membrane sector of the complex.

It is found in the cell inner membrane. The catalysed reaction is a quinone + NADH + 5 H(+)(in) = a quinol + NAD(+) + 4 H(+)(out). In terms of biological role, NDH-1 shuttles electrons from NADH, via FMN and iron-sulfur (Fe-S) centers, to quinones in the respiratory chain. The immediate electron acceptor for the enzyme in this species is believed to be ubiquinone. Couples the redox reaction to proton translocation (for every two electrons transferred, four hydrogen ions are translocated across the cytoplasmic membrane), and thus conserves the redox energy in a proton gradient. The chain is NADH-quinone oxidoreductase subunit K from Thiobacillus denitrificans (strain ATCC 25259 / T1).